We begin with the raw amino-acid sequence, 109 residues long: MYTKAVLLAFVGSAAAFNAPMMTVRRDAIATGAAAAVVAPLLRPAGAKMATDSKAPLIELFDERDGCKGPAANKASDVGEPGLCVKVSMQKVAMNAAAAKSVATNYMRK.

The (2R,3E)-phycocyanobilin site is built by valine 6, alanine 16, phenylalanine 17, proline 20, aspartate 27, alanine 28, and alanine 39.

Belongs to the phycoerythrin family. As to quaternary structure, heterotetramer of 2 identical alpha chains and 2 identical beta chains which form 2 alpha-beta heterodimers within the heterotetramer. The two alpha-beta heterodimers are rotated to an open configuration in contrast to the closed configuration found in other cryptophyte species due to the insertion of a single amino acid, Asp-65, in a conserved region of the alpha chain. In the open form, the central chromophores are not in physical contact but are separated by a water-filled channel. Contains three phycocyanobilin chromophores with binding mediated by both the alpha and beta subunits.

Its subcellular location is the plastid. It is found in the chloroplast thylakoid membrane. Functionally, light-harvesting photosynthetic tetrapyrrole chromophore-protein from the phycobiliprotein complex. This chain is Phycoerythrin alpha-1 subunit, found in Hemiselmis virescens.